The primary structure comprises 171 residues: Probable tryptophan transport protein (171 aa).

4 helical membrane passes run 9-31, 58-80, 107-129, and 139-161; these read IINS…ILFG, GVVA…PNII, IITT…LIIV, and FITV…FVAV.

Belongs to the vitamin uptake transporter (VUT/ECF) (TC 2.A.88) family. TrpP subfamily.

It is found in the cell membrane. Its function is as follows. Probably involved in tryptophan uptake. This is Probable tryptophan transport protein (trpP) from Clostridium acetobutylicum (strain ATCC 824 / DSM 792 / JCM 1419 / IAM 19013 / LMG 5710 / NBRC 13948 / NRRL B-527 / VKM B-1787 / 2291 / W).